A 463-amino-acid chain; its full sequence is UDP-N-acetylmuramoylalanine--D-glutamate ligase (463 aa).

116–122 (GTNGKTT) provides a ligand contact to ATP.

Belongs to the MurCDEF family.

It is found in the cytoplasm. The catalysed reaction is UDP-N-acetyl-alpha-D-muramoyl-L-alanine + D-glutamate + ATP = UDP-N-acetyl-alpha-D-muramoyl-L-alanyl-D-glutamate + ADP + phosphate + H(+). The protein operates within cell wall biogenesis; peptidoglycan biosynthesis. In terms of biological role, cell wall formation. Catalyzes the addition of glutamate to the nucleotide precursor UDP-N-acetylmuramoyl-L-alanine (UMA). This chain is UDP-N-acetylmuramoylalanine--D-glutamate ligase, found in Synechococcus elongatus (strain ATCC 33912 / PCC 7942 / FACHB-805) (Anacystis nidulans R2).